Here is a 363-residue protein sequence, read N- to C-terminus: Phosphoserine aminotransferase (363 aa).

Residue R42 participates in L-glutamate binding. Residues W105, T155, D175, and Q198 each coordinate pyridoxal 5'-phosphate. K199 carries the post-translational modification N6-(pyridoxal phosphate)lysine. 240 to 241 (NT) provides a ligand contact to pyridoxal 5'-phosphate.

This sequence belongs to the class-V pyridoxal-phosphate-dependent aminotransferase family. SerC subfamily. As to quaternary structure, homodimer. Pyridoxal 5'-phosphate is required as a cofactor.

The protein localises to the cytoplasm. The catalysed reaction is O-phospho-L-serine + 2-oxoglutarate = 3-phosphooxypyruvate + L-glutamate. It carries out the reaction 4-(phosphooxy)-L-threonine + 2-oxoglutarate = (R)-3-hydroxy-2-oxo-4-phosphooxybutanoate + L-glutamate. It participates in amino-acid biosynthesis; L-serine biosynthesis; L-serine from 3-phospho-D-glycerate: step 2/3. It functions in the pathway cofactor biosynthesis; pyridoxine 5'-phosphate biosynthesis; pyridoxine 5'-phosphate from D-erythrose 4-phosphate: step 3/5. Catalyzes the reversible conversion of 3-phosphohydroxypyruvate to phosphoserine and of 3-hydroxy-2-oxo-4-phosphonooxybutanoate to phosphohydroxythreonine. This is Phosphoserine aminotransferase from Janthinobacterium sp. (strain Marseille) (Minibacterium massiliensis).